The following is a 618-amino-acid chain: DNA mismatch repair protein MutL (618 aa).

This sequence belongs to the DNA mismatch repair MutL/HexB family.

Its function is as follows. This protein is involved in the repair of mismatches in DNA. It is required for dam-dependent methyl-directed DNA mismatch repair. May act as a 'molecular matchmaker', a protein that promotes the formation of a stable complex between two or more DNA-binding proteins in an ATP-dependent manner without itself being part of a final effector complex. In Bradyrhizobium sp. (strain BTAi1 / ATCC BAA-1182), this protein is DNA mismatch repair protein MutL.